A 431-amino-acid polypeptide reads, in one-letter code: Glucose-1-phosphate adenylyltransferase (431 aa).

Residue K39 coordinates beta-D-fructose 1,6-bisphosphate. Positions 40, 46, and 52 each coordinate AMP. Y114 contacts alpha-D-glucose 1-phosphate. An AMP-binding site is contributed by R130. Residues G179, 194–195, and S212 contribute to the alpha-D-glucose 1-phosphate site; that span reads EK. Residue R386 coordinates AMP. 429 to 431 contacts beta-D-fructose 1,6-bisphosphate; the sequence is QER.

Belongs to the bacterial/plant glucose-1-phosphate adenylyltransferase family. As to quaternary structure, homotetramer.

The catalysed reaction is alpha-D-glucose 1-phosphate + ATP + H(+) = ADP-alpha-D-glucose + diphosphate. It participates in glycan biosynthesis; glycogen biosynthesis. Allosterically activated by fructose-1,6-bisphosphate (F16BP) and inhibited by AMP. Involved in the biosynthesis of ADP-glucose, a building block required for the elongation reactions to produce glycogen. Catalyzes the reaction between ATP and alpha-D-glucose 1-phosphate (G1P) to produce pyrophosphate and ADP-Glc. This chain is Glucose-1-phosphate adenylyltransferase, found in Klebsiella pneumoniae subsp. pneumoniae (strain ATCC 700721 / MGH 78578).